The chain runs to 170 residues: MAKLTILEFPDERLRTKAAPVETVDDETRKLVDDMLETMYDAQGIGLAATQVDVHRRVIVMDVSDDRSQPRVLINPEYTPLGDEREPMQEGCLSIPEYYAEVPRALRVSLKALDRDGNPYELEADGLLAHCIQHEYDHLEGVLFVDYLSPLKRDRVLKKMQKRHRAMQDA.

Fe cation contacts are provided by cysteine 92 and histidine 134. Glutamate 135 is a catalytic residue. Histidine 138 provides a ligand contact to Fe cation.

This sequence belongs to the polypeptide deformylase family. Fe(2+) is required as a cofactor.

It carries out the reaction N-terminal N-formyl-L-methionyl-[peptide] + H2O = N-terminal L-methionyl-[peptide] + formate. In terms of biological role, removes the formyl group from the N-terminal Met of newly synthesized proteins. Requires at least a dipeptide for an efficient rate of reaction. N-terminal L-methionine is a prerequisite for activity but the enzyme has broad specificity at other positions. This is Peptide deformylase from Chromohalobacter salexigens (strain ATCC BAA-138 / DSM 3043 / CIP 106854 / NCIMB 13768 / 1H11).